A 346-amino-acid polypeptide reads, in one-letter code: Serine/threonine-protein phosphatase PP1(5.9) (346 aa).

Residues Asp102, His104, Asp130, and Asn162 each coordinate Mn(2+). His163 (proton donor) is an active-site residue. The Mn(2+) site is built by His211 and His287.

The protein belongs to the PPP phosphatase family. PP-1 subfamily. Mn(2+) is required as a cofactor.

The enzyme catalyses O-phospho-L-seryl-[protein] + H2O = L-seryl-[protein] + phosphate. It carries out the reaction O-phospho-L-threonyl-[protein] + H2O = L-threonyl-[protein] + phosphate. The chain is Serine/threonine-protein phosphatase PP1(5.9) from Trypanosoma brucei brucei.